The chain runs to 430 residues: Zinc finger and SCAN domain-containing protein 4 (430 aa).

Positions 1 to 38 are disordered; it reads MASDLRISFQGEPSRNDPGSENLEHKPSQGPAVQEEEE. The SCAN box domain occupies 44 to 126; sequence RTQLSLLQNS…KFMEDLTDES (83 aa). The segment covering 164 to 185 has biased composition (polar residues); the sequence is GSPTGTDMETPSWTPQDTSLET. 3 disordered regions span residues 164-196, 224-257, and 281-300; these read GSPT…KENG, YPRP…SLKG, and EPVP…GHQE. C2H2-type zinc fingers lie at residues 309–331, 337–359, 365–387, and 393–415; these read YRCE…QRRH, FTCA…QKIH, FTCS…ERIH, and YECS…LRNH.

It is found in the nucleus. Its subcellular location is the chromosome. It localises to the telomere. Embryonic stem (ES) cell-specific transcription factor required to regulate ES cell pluripotency. Binds telomeres and plays a key role in genomic stability in ES cells by regulating telomere elongation. Acts as an activator of spontaneous telomere sister chromatid exchange (T-SCE) and telomere elongation in undifferentiated ES cells. The protein is Zinc finger and SCAN domain-containing protein 4 (ZSCAN4) of Ailuropoda melanoleuca (Giant panda).